We begin with the raw amino-acid sequence, 554 residues long: Carboxypeptidase Y homolog A (554 aa).

The signal sequence occupies residues 1 to 17 (MRIAASTVLFGAASAAS). The propeptide occupies 18–137 (FQQQAQHVLS…RLEEYNLRVK (120 aa)). 5 disulfide bridges follow: Cys191-Cys431, Cys325-Cys339, Cys349-Cys372, Cys356-Cys365, and Cys394-Cys401. Asn222 carries N-linked (GlcNAc...) asparagine glycosylation. Ser278 is an active-site residue. Residue Asp470 is part of the active site. The N-linked (GlcNAc...) asparagine glycan is linked to Asn518. His529 is an active-site residue.

It belongs to the peptidase S10 family.

The protein localises to the vacuole. The enzyme catalyses Release of a C-terminal amino acid with broad specificity.. Functionally, vacuolar carboxypeptidase involved in degradation of small peptides. Digests preferentially peptides containing an aliphatic or hydrophobic residue in P1' position, as well as methionine, leucine or phenylalanine in P1 position of ester substrate. In Chaetomium globosum (strain ATCC 6205 / CBS 148.51 / DSM 1962 / NBRC 6347 / NRRL 1970) (Soil fungus), this protein is Carboxypeptidase Y homolog A (CPYA).